The chain runs to 374 residues: Protein FAM199X (374 aa).

Residues 238-343 (YIREHSPRQR…QLKEQRQARK (106 aa)) are disordered. The span at 261 to 295 (SNGSTSGVSAHSSSNASMVSSTSSSTASTGSNSST) shows a compositional bias: low complexity. Residues 315-334 (DSKKRSKQRKMQQKALRKRQ) are compositionally biased toward basic residues. Residues 317–346 (KKRSKQRKMQQKALRKRQLKEQRQARKERL) adopt a coiled-coil conformation.

This sequence belongs to the FAM199 family.

This chain is Protein FAM199X (fam199x), found in Danio rerio (Zebrafish).